Reading from the N-terminus, the 243-residue chain is MAKVEQVLSLEPQHELKFRGPFTDVVTTNLKLGNPTDRNVCFKVKTTAPRRYCVRPNSGIIDAGASINVSVMLQPFDYDPNEKSKHKFMVQSMFAPADTSDMEAAWKEAKPEDLMDSKLRCVFELPAENDKPHDVEINKIISTTASKTETPVVSKALSSALDDTEVKKVMEECKRLQSEVQRLREENKQLKEEDGLRMRKPVLSNSPAPAPATPGKEEGLSTRLLALVVLFFIVGVIIGKIAL.

The residue at position 2 (A2) is an N-acetylalanine. Residues 2-218 (AKVEQVLSLE…PAPATPGKEE (217 aa)) are Cytoplasmic-facing. Residues 7–124 (VLSLEPQHEL…MDSKLRCVFE (118 aa)) enclose the MSP domain. The residue at position 146 (S146) is a Phosphoserine. A Glycyl lysine isopeptide (Lys-Gly) (interchain with G-Cter in SUMO1) cross-link involves residue K147. Phosphothreonine is present on T150. S158 and S159 each carry phosphoserine. Positions 161-196 (LDDTEVKKVMEECKRLQSEVQRLREENKQLKEEDGL) form a coiled coil. A compositionally biased stretch (basic and acidic residues) spans 185–197 (EENKQLKEEDGLR). Residues 185 to 217 (EENKQLKEEDGLRMRKPVLSNSPAPAPATPGKE) form a disordered region. The residue at position 206 (S206) is a Phosphoserine. A helical; Anchor for type IV membrane protein transmembrane segment spans residues 219 to 239 (GLSTRLLALVVLFFIVGVIIG).

It belongs to the VAMP-associated protein (VAP) (TC 9.B.17) family. Homodimer, and heterodimer with VAPA. Interacts with VAMP1 and VAMP2. Interacts (via MSP domain) with ZFYVE27. Interacts with RMDN3. Interacts with KIF5A in a ZFYVE27-dependent manner. Interacts (via MSP domain) with STARD3 (via phospho-FFAT motif). Interacts with STARD3NL (via FFAT motif). Interacts with CERT1. Interacts with PLEKHA3 and SACM1L to form a ternary complex. Interacts with VPS13A (via FFAT motif). Interacts with RB1CC1 (via phosphorylated FFAT motif), MIGA2 (via phosphorylated FFAT motif), RMDN3 (via phosphorylated FFAT motif), OSBPL1A (via FFAT motif), KCNB1 (via phosphorylated FFAT motif) and KCNB2 (via phosphorylated FFAT motif). Interacts (via MSP domain) with WDR44 (via FFAT motif); the interactions connect the endoplasmic reticulum (ER) with the endosomal tubule.

It is found in the endoplasmic reticulum membrane. Its function is as follows. Endoplasmic reticulum (ER)-anchored protein that mediates the formation of contact sites between the ER and endosomes via interaction with FFAT motif-containing proteins such as STARD3 or WDR44. Interacts with STARD3 in a FFAT motif phosphorylation dependent manner. Via interaction with WDR44 participates in neosynthesized protein export. Participates in the endoplasmic reticulum unfolded protein response (UPR) by inducing ERN1/IRE1 activity. Involved in cellular calcium homeostasis regulation. In Sus scrofa (Pig), this protein is Vesicle-associated membrane protein-associated protein B.